The chain runs to 448 residues: Histidine--tRNA ligase (448 aa).

Disordered regions lie at residues 1–20 (MAIK…SPKL) and 428–448 (AGQA…QEKA).

Belongs to the class-II aminoacyl-tRNA synthetase family. As to quaternary structure, homodimer.

The protein localises to the cytoplasm. It carries out the reaction tRNA(His) + L-histidine + ATP = L-histidyl-tRNA(His) + AMP + diphosphate + H(+). This chain is Histidine--tRNA ligase, found in Deinococcus deserti (strain DSM 17065 / CIP 109153 / LMG 22923 / VCD115).